Here is a 111-residue protein sequence, read N- to C-terminus: Small ribosomal subunit protein uS10 (111 aa).

The protein belongs to the universal ribosomal protein uS10 family. Part of the 30S ribosomal subunit.

Involved in the binding of tRNA to the ribosomes. The protein is Small ribosomal subunit protein uS10 of Ehrlichia ruminantium (strain Welgevonden).